The following is a 345-amino-acid chain: MKKVTMLGAGSWGTALALVLTDNGNEVCVWAHRADLIHQINELHENKDYLPNVKLSTSIKGTTDMKEAVSDADVIIVAVPTKAIREVLRQAVPFITKKAVFVHVSKGIEPDSLLRISEIMEIELPSDVRKDIVVLSGPSHAEEVGLRHPTTVTASSKSMRAAEEVQDLFINHNFRVYTNPDIIGVEIGGALKNIIALAAGITDGLGYGDNAKAALITRGLAEIARLGTKMGGNPLTFSGLTGVGDLIVTCTSVHSRNWRAGNLLGKGYKLEDVLEEMGMVVEGVRTTKAAYQLSKKYDVKMPITEALHQVLFNGQKVETAVESLMARGKTHEMEDLVNTFENQVK.

The NADPH site is built by Ser-11, Trp-12, His-32, Arg-33, and Lys-106. Lys-106, Gly-137, and Ser-139 together coordinate sn-glycerol 3-phosphate. Ala-141 contacts NADPH. Sn-glycerol 3-phosphate-binding residues include Lys-192, Asp-245, Ser-255, Arg-256, and Asn-257. Residue Lys-192 is the Proton acceptor of the active site. Position 256 (Arg-256) interacts with NADPH. Residues Val-280 and Glu-282 each contribute to the NADPH site.

Belongs to the NAD-dependent glycerol-3-phosphate dehydrogenase family.

It is found in the cytoplasm. It carries out the reaction sn-glycerol 3-phosphate + NAD(+) = dihydroxyacetone phosphate + NADH + H(+). The catalysed reaction is sn-glycerol 3-phosphate + NADP(+) = dihydroxyacetone phosphate + NADPH + H(+). The protein operates within membrane lipid metabolism; glycerophospholipid metabolism. Its activity is regulated as follows. Does not seem to be inhibited by sn-glycerol 3-phosphate, in contrast to the E.coli homolog enzyme which is very sensitive to allosteric inhibition by G3P. Its function is as follows. Catalyzes the reduction of the glycolytic intermediate dihydroxyacetone phosphate (DHAP) to sn-glycerol 3-phosphate (G3P), the key precursor for phospholipid synthesis. This chain is Glycerol-3-phosphate dehydrogenase [NAD(P)+], found in Bacillus subtilis (strain 168).